The sequence spans 200 residues: MDIIFASNNYHKFIEMESILKPHQITLLKDFQIDEKEIIESGLTFEANAQIKARAFAKRFNQVAIADDSGIIIEAISPLPGIYSKRYSGLGDTVNNIKVLDVLKNKENRQARFVCAIAIAFPDGKIFTYVGNMLGNIALNLKGSMGFGYDPIFIPDGKQETLGELGSTYKDEHSHRRHALNNFLEAKDEIIDYWRYTWKK.

7–12 (SNNYHK) provides a ligand contact to substrate. Residue Asp-68 is the Proton acceptor of the active site. Asp-68 contributes to the Mg(2+) binding site. Residues Ser-69, 147–150 (FGYD), Lys-170, and 175–176 (HR) each bind substrate.

The protein belongs to the HAM1 NTPase family. In terms of assembly, homodimer. Requires Mg(2+) as cofactor.

It carries out the reaction XTP + H2O = XMP + diphosphate + H(+). The catalysed reaction is dITP + H2O = dIMP + diphosphate + H(+). The enzyme catalyses ITP + H2O = IMP + diphosphate + H(+). Its function is as follows. Pyrophosphatase that catalyzes the hydrolysis of nucleoside triphosphates to their monophosphate derivatives, with a high preference for the non-canonical purine nucleotides XTP (xanthosine triphosphate), dITP (deoxyinosine triphosphate) and ITP. Seems to function as a house-cleaning enzyme that removes non-canonical purine nucleotides from the nucleotide pool, thus preventing their incorporation into DNA/RNA and avoiding chromosomal lesions. This Acholeplasma laidlawii (strain PG-8A) protein is dITP/XTP pyrophosphatase.